Reading from the N-terminus, the 92-residue chain is Small ribosomal subunit protein uS19 (92 aa).

The protein belongs to the universal ribosomal protein uS19 family.

Functionally, protein S19 forms a complex with S13 that binds strongly to the 16S ribosomal RNA. The polypeptide is Small ribosomal subunit protein uS19 (Bifidobacterium adolescentis (strain ATCC 15703 / DSM 20083 / NCTC 11814 / E194a)).